Reading from the N-terminus, the 313-residue chain is MNSGFTHITVLLEEAVEALAVRADGCYLDGTFGRGGHSRLILSQLGPDGRLLGFDKDPQAIATGQALAAEDGRFVIVQRSFAELGSETQERGLAGKVSGILLDLGVSSPQLDDPERGFSFMNDGPLDMRMDPARGISAAEFIATAPAEEIARVFKEYGEERFAKRMANAVVARREVQPFERTADLAEVLKVANPAWEKGKNPATRAFQGLRIHVNNELGDLEAGLEAALDALEVGGRLVVISFHSLEDRIVKLFMRKLAKGEADNMPRNLPIQFKPFEPKIKIHGKAQFASDAETKANPRSRSAVMRVAEKLR.

Residues Gly35 to His37, Asp55, Phe81, Asp103, and Gln110 each bind S-adenosyl-L-methionine.

This sequence belongs to the methyltransferase superfamily. RsmH family.

It is found in the cytoplasm. The catalysed reaction is cytidine(1402) in 16S rRNA + S-adenosyl-L-methionine = N(4)-methylcytidine(1402) in 16S rRNA + S-adenosyl-L-homocysteine + H(+). Specifically methylates the N4 position of cytidine in position 1402 (C1402) of 16S rRNA. The chain is Ribosomal RNA small subunit methyltransferase H from Pseudomonas syringae pv. syringae (strain B728a).